We begin with the raw amino-acid sequence, 185 residues long: Ribosome-recycling factor (185 aa).

Belongs to the RRF family.

It localises to the cytoplasm. Functionally, responsible for the release of ribosomes from messenger RNA at the termination of protein biosynthesis. May increase the efficiency of translation by recycling ribosomes from one round of translation to another. This Sodalis glossinidius (strain morsitans) protein is Ribosome-recycling factor.